We begin with the raw amino-acid sequence, 893 residues long: DNA gyrase subunit A (893 aa).

The Topo IIA-type catalytic domain occupies 35-501 (LPDVRDGLKP…GLEDLEDEDL (467 aa)). Residue tyrosine 123 is the O-(5'-phospho-DNA)-tyrosine intermediate of the active site. The GyrA-box signature appears at 528-534 (QNRGGRG). The tract at residues 810–893 (VNEEDDNEEN…ASDNEEDSDE (84 aa)) is disordered. Composition is skewed to acidic residues over residues 812-821 (EEDDNEENAD) and 852-862 (DAEMESVESPE). Residues 863–879 (NDDRIDIRQDFMDRVNE) are compositionally biased toward basic and acidic residues. Positions 880-893 (DIESASDNEEDSDE) are enriched in acidic residues.

It belongs to the type II topoisomerase GyrA/ParC subunit family. As to quaternary structure, heterotetramer, composed of two GyrA and two GyrB chains. In the heterotetramer, GyrA contains the active site tyrosine that forms a transient covalent intermediate with DNA, while GyrB binds cofactors and catalyzes ATP hydrolysis.

The protein resides in the cytoplasm. The enzyme catalyses ATP-dependent breakage, passage and rejoining of double-stranded DNA.. In terms of biological role, a type II topoisomerase that negatively supercoils closed circular double-stranded (ds) DNA in an ATP-dependent manner to modulate DNA topology and maintain chromosomes in an underwound state. Negative supercoiling favors strand separation, and DNA replication, transcription, recombination and repair, all of which involve strand separation. Also able to catalyze the interconversion of other topological isomers of dsDNA rings, including catenanes and knotted rings. Type II topoisomerases break and join 2 DNA strands simultaneously in an ATP-dependent manner. The protein is DNA gyrase subunit A of Staphylococcus epidermidis (strain ATCC 35984 / DSM 28319 / BCRC 17069 / CCUG 31568 / BM 3577 / RP62A).